A 183-amino-acid chain; its full sequence is Ran guanine nucleotide release factor (183 aa).

The segment at 23-66 (ELRQIPDNQEVFAHSQTDQSIIIELLEYQSQVQDADAARYHFED) is interaction with RAN.

This sequence belongs to the MOG1 family. As to quaternary structure, monomer. Interacts with ran.

It localises to the nucleus. The protein localises to the cytoplasm. It is found in the perinuclear region. The protein resides in the cell membrane. May regulate the intracellular trafficking of RAN. Promotes guanine nucleotide release from RAN and inhibits binding of new GTP. Plays a role in the regulation of the levels of GTP-bound RAN in the nucleus. Required for normal expression of the ion channel hcn4 and for normal expression of the cardiac transcription factors nkx2.5, gata4 and hand2 during embryonic development. Required for normal embryonic heart development and normal heart rate. The chain is Ran guanine nucleotide release factor from Danio rerio (Zebrafish).